A 387-amino-acid polypeptide reads, in one-letter code: Deoxyhypusine synthase (387 aa).

NAD(+) contacts are provided by residues 108–112 (SNLIS), 134–136 (SAG), glutamate 140, and aspartate 257. 139–140 (EE) contributes to the spermidine binding site. Aspartate 262 contacts spermidine. Glycine 304 lines the NAD(+) pocket. Histidine 309 lines the spermidine pocket. 329-330 (TG) provides a ligand contact to NAD(+). Spermidine contacts are provided by residues 335–337 (GSD) and 344–350 (EAVSWGK). Lysine 350 acts as the Nucleophile in catalysis. 363-364 (DV) lines the NAD(+) pocket.

The protein belongs to the deoxyhypusine synthase family. In terms of assembly, homotetramer. It depends on NAD(+) as a cofactor.

It catalyses the reaction [eIF5A protein]-L-lysine + spermidine = [eIF5A protein]-deoxyhypusine + propane-1,3-diamine. It functions in the pathway protein modification; eIF5A hypusination. Functionally, catalyzes the NAD-dependent oxidative cleavage of spermidine and the subsequent transfer of the butylamine moiety of spermidine to the epsilon-amino group of a specific lysine residue of the eIF-5A precursor protein to form the intermediate deoxyhypusine residue. The protein is Deoxyhypusine synthase of Saccharomyces cerevisiae (strain ATCC 204508 / S288c) (Baker's yeast).